The chain runs to 318 residues: Large ribosomal subunit protein uL10 (318 aa).

Tyr24 is modified (phosphotyrosine). Thr59 carries the post-translational modification Phosphothreonine. Residue Lys264 forms a Glycyl lysine isopeptide (Lys-Gly) (interchain with G-Cter in ubiquitin) linkage. A Glycyl lysine isopeptide (Lys-Gly) (interchain with G-Cter in SUMO1); alternate cross-link involves residue Lys298. Lys298 is covalently cross-linked (Glycyl lysine isopeptide (Lys-Gly) (interchain with G-Cter in SUMO2); alternate). The segment at Lys298–Asp318 is disordered. The segment covering Glu303–Met312 has biased composition (acidic residues). Phosphoserine occurs at positions 305 and 308.

It belongs to the universal ribosomal protein uL10 family. As to quaternary structure, P0 forms a pentameric complex by interaction with dimers of P1 and P2. Identified in a IGF2BP1-dependent mRNP granule complex containing untranslated mRNAs. Interacts with APEX1. Interacts with FMR1. Post-translationally, ubiquitinated at Lys-264 by RNF14 and RNF25 in response to ribosome collisions (ribosome stalling).

The protein resides in the nucleus. The protein localises to the cytoplasm. Ribosomal protein P0 is the functional equivalent of E.coli protein L10. The sequence is that of Large ribosomal subunit protein uL10 (RPLP0) from Sus scrofa (Pig).